An 89-amino-acid polypeptide reads, in one-letter code: MAISQEKKNEIMKKYARHEGDTGSAEVQIAVLTADINELNDHIKAHKKDYASYRGLMKKIGHRRNLLAYLRNTDVQRYRELVKSLGLRR.

It belongs to the universal ribosomal protein uS15 family. In terms of assembly, part of the 30S ribosomal subunit. Forms a bridge to the 50S subunit in the 70S ribosome, contacting the 23S rRNA.

In terms of biological role, one of the primary rRNA binding proteins, it binds directly to 16S rRNA where it helps nucleate assembly of the platform of the 30S subunit by binding and bridging several RNA helices of the 16S rRNA. Forms an intersubunit bridge (bridge B4) with the 23S rRNA of the 50S subunit in the ribosome. The protein is Small ribosomal subunit protein uS15 of Ligilactobacillus salivarius (strain UCC118) (Lactobacillus salivarius).